Consider the following 195-residue polypeptide: Large ribosomal subunit protein uL5 (195 aa).

This sequence belongs to the universal ribosomal protein uL5 family. As to quaternary structure, part of the 50S ribosomal subunit; part of the 5S rRNA/L5/L18/L25 subcomplex. Contacts the 5S rRNA and the P site tRNA. Forms a bridge to the 30S subunit in the 70S ribosome.

In terms of biological role, this is one of the proteins that bind and probably mediate the attachment of the 5S RNA into the large ribosomal subunit, where it forms part of the central protuberance. In the 70S ribosome it contacts protein S13 of the 30S subunit (bridge B1b), connecting the 2 subunits; this bridge is implicated in subunit movement. Contacts the P site tRNA; the 5S rRNA and some of its associated proteins might help stabilize positioning of ribosome-bound tRNAs. The sequence is that of Large ribosomal subunit protein uL5 from Pelodictyon phaeoclathratiforme (strain DSM 5477 / BU-1).